Here is a 569-residue protein sequence, read N- to C-terminus: WD repeat-containing protein 20 (569 aa).

At A2 the chain carries N-acetylalanine. WD repeat units lie at residues 94 to 138 (RIYK…KETS), 139 to 210 (KLFN…KSTR), 211 to 252 (NPLL…FDSV), 253 to 331 (ELHG…SGSD), 332 to 426 (EDFQ…NSVP), 427 to 523 (PPLP…VPLL), and 524 to 559 (EPLI…CTWG). Residues S357 and S360 each carry the phosphoserine modification. 2 stretches are compositionally biased toward polar residues: residues 405–423 (NATS…TPGN) and 431–445 (RSNS…NAGS). The tract at residues 405-445 (NATSPPAGSNGNSVTTPGNSVPPPLPRSNSLPHSAVSNAGS) is disordered. Phosphoserine occurs at positions 432, 434, and 465. A mediates XPO1-dependent nuclear export of WDR20-USP12 complexes region spans residues 450–468 (MDGAIASGVSKFATLSLHD).

Interacts with USP12; promotes translocation of USP12/WDR20 to the plasma membrane. Component of the USP12/WDR20/WDR48 deubiquitinating complex. Interacts with USP46; contributes to the cytoplasmic localization of the USP46/WDR20 complex. Component of the USP12/DMWD/WDR48 deubiquitinating complex.

It localises to the cytoplasm. Its subcellular location is the nucleus. Its function is as follows. Regulator of deubiquitinating complexes. Activates deubiquitinating activity of complexes containing USP12. Anchors at the base of the ubiquitin-contacting loop of USP12 and remotely modulates the catalytic center of the enzyme. Regulates shuttling of the USP12 deubiquitinase complex between the plasma membrane, cytoplasm and nucleus. This Homo sapiens (Human) protein is WD repeat-containing protein 20 (WDR20).